Consider the following 162-residue polypeptide: Disulfide bond formation protein B (162 aa).

Residues 1–8 (MTPLFRKA) lie on the Cytoplasmic side of the membrane. The chain crosses the membrane as a helical span at residues 9–25 (VWLLFAVSVCAFAGSLA). Topologically, residues 26–43 (AQYVLGMEPCVLCISQRL) are periplasmic. Cysteine 35 and cysteine 38 are oxidised to a cystine. Residues 44–60 (CVLATALCTAIVLMCRP) form a helical membrane-spanning segment. At 61–67 (RRRAGGL) the chain is on the cytoplasmic side. A helical membrane pass occupies residues 68–85 (FGAVFISIPAVTGISVAA). The Periplasmic portion of the chain corresponds to 86-141 (YQLWLQSLPPGTAPSCGAPWTFRLKGWPLFDWFEPVVRGFGNCAEPDYLLGIALPV). Cysteines 101 and 128 form a disulfide. The chain crosses the membrane as a helical span at residues 142 to 160 (WSVAYFLAVVLTVWWAWAR). Residues 161 to 162 (AK) are Cytoplasmic-facing.

The protein belongs to the DsbB family.

It localises to the cell inner membrane. In terms of biological role, required for disulfide bond formation in some periplasmic proteins. Acts by oxidizing the DsbA protein. The chain is Disulfide bond formation protein B from Neisseria meningitidis serogroup B (strain ATCC BAA-335 / MC58).